Consider the following 313-residue polypeptide: Methionyl-tRNA formyltransferase (313 aa).

109–112 contributes to the (6S)-5,6,7,8-tetrahydrofolate binding site; it reads SLLP.

The protein belongs to the Fmt family.

It carries out the reaction L-methionyl-tRNA(fMet) + (6R)-10-formyltetrahydrofolate = N-formyl-L-methionyl-tRNA(fMet) + (6S)-5,6,7,8-tetrahydrofolate + H(+). Attaches a formyl group to the free amino group of methionyl-tRNA(fMet). The formyl group appears to play a dual role in the initiator identity of N-formylmethionyl-tRNA by promoting its recognition by IF2 and preventing the misappropriation of this tRNA by the elongation apparatus. This is Methionyl-tRNA formyltransferase from Thermotoga sp. (strain RQ2).